The primary structure comprises 198 residues: MEHYISLLVKSIFIENMALSFFLGMCTFLAVSKKVKTSFGLGVAVVVVLTIAVPVNNLVYTYLLKENALVAGVDLTFLSFITFIGVIAALVQILEMILDRFFPPLYNALGIFLPLITVNCAIFGGVSFMVQRDYNFAESVVYGFGSGIGWMLAIVALAGIREKMKYSDVPPGLRGLGITFITVGLMALGFMSFSGVQL.

6 consecutive transmembrane segments (helical) span residues 11–31 (SIFI…FLAV), 39–59 (FGLG…NNLV), 77–97 (FLSF…LEMI), 110–130 (GIFL…SFMV), 140–160 (VVYG…LAGI), and 176–196 (LGIT…FSGV).

Belongs to the NqrDE/RnfAE family. In terms of assembly, composed of six subunits; NqrA, NqrB, NqrC, NqrD, NqrE and NqrF.

The protein localises to the cell inner membrane. The catalysed reaction is a ubiquinone + n Na(+)(in) + NADH + H(+) = a ubiquinol + n Na(+)(out) + NAD(+). NQR complex catalyzes the reduction of ubiquinone-1 to ubiquinol by two successive reactions, coupled with the transport of Na(+) ions from the cytoplasm to the periplasm. NqrA to NqrE are probably involved in the second step, the conversion of ubisemiquinone to ubiquinol. In Aliivibrio fischeri (strain ATCC 700601 / ES114) (Vibrio fischeri), this protein is Na(+)-translocating NADH-quinone reductase subunit E.